Reading from the N-terminus, the 296-residue chain is Small ribosomal subunit biogenesis GTPase RsgA (296 aa).

One can recognise a CP-type G domain in the interval 65–226 (TNELIRPPIS…VADTPGFSSL (162 aa)). GTP contacts are provided by residues 114 to 117 (TKMD) and 169 to 177 (GQSGVGKSS). Zn(2+) contacts are provided by cysteine 250, cysteine 255, histidine 257, and cysteine 263.

It belongs to the TRAFAC class YlqF/YawG GTPase family. RsgA subfamily. As to quaternary structure, monomer. Associates with 30S ribosomal subunit, binds 16S rRNA. Requires Zn(2+) as cofactor.

Its subcellular location is the cytoplasm. Functionally, one of several proteins that assist in the late maturation steps of the functional core of the 30S ribosomal subunit. Helps release RbfA from mature subunits. May play a role in the assembly of ribosomal proteins into the subunit. Circularly permuted GTPase that catalyzes slow GTP hydrolysis, GTPase activity is stimulated by the 30S ribosomal subunit. The polypeptide is Small ribosomal subunit biogenesis GTPase RsgA (Bacillus velezensis (strain DSM 23117 / BGSC 10A6 / LMG 26770 / FZB42) (Bacillus amyloliquefaciens subsp. plantarum)).